The chain runs to 159 residues: NADH-quinone oxidoreductase subunit B (159 aa).

4 residues coordinate [4Fe-4S] cluster: C32, C33, C97, and C126.

It belongs to the complex I 20 kDa subunit family. NDH-1 is composed of 14 different subunits. Subunits NuoB, C, D, E, F, and G constitute the peripheral sector of the complex. [4Fe-4S] cluster serves as cofactor.

The protein localises to the cell inner membrane. The enzyme catalyses a quinone + NADH + 5 H(+)(in) = a quinol + NAD(+) + 4 H(+)(out). Its function is as follows. NDH-1 shuttles electrons from NADH, via FMN and iron-sulfur (Fe-S) centers, to quinones in the respiratory chain. The immediate electron acceptor for the enzyme in this species is believed to be ubiquinone. Couples the redox reaction to proton translocation (for every two electrons transferred, four hydrogen ions are translocated across the cytoplasmic membrane), and thus conserves the redox energy in a proton gradient. The protein is NADH-quinone oxidoreductase subunit B of Helicobacter pylori (strain J99 / ATCC 700824) (Campylobacter pylori J99).